We begin with the raw amino-acid sequence, 284 residues long: 2-dehydro-3-deoxyphosphooctonate aldolase (284 aa).

The protein belongs to the KdsA family.

Its subcellular location is the cytoplasm. It carries out the reaction D-arabinose 5-phosphate + phosphoenolpyruvate + H2O = 3-deoxy-alpha-D-manno-2-octulosonate-8-phosphate + phosphate. It participates in carbohydrate biosynthesis; 3-deoxy-D-manno-octulosonate biosynthesis; 3-deoxy-D-manno-octulosonate from D-ribulose 5-phosphate: step 2/3. The protein operates within bacterial outer membrane biogenesis; lipopolysaccharide biosynthesis. The protein is 2-dehydro-3-deoxyphosphooctonate aldolase of Burkholderia vietnamiensis (strain G4 / LMG 22486) (Burkholderia cepacia (strain R1808)).